A 588-amino-acid polypeptide reads, in one-letter code: Sentrin-specific protease 2 (588 aa).

Positions 28–31 match the Nuclear localization signal motif; sequence KRRR. Ser32 bears the Phosphoserine mark. A Nuclear localization signal motif is present at residues 47–52; sequence PAKRPR. The segment at 157–184 is disordered; the sequence is EGYNRRPSGRRHSKSNPESSLTWKPQEQ. The span at 172–184 shows a compositional bias: polar residues; it reads NPESSLTWKPQEQ. The Nuclear export signal motif lies at 316 to 331; that stretch reads MEPDLSEEVSARLRLG. Phosphoserine occurs at positions 332 and 343. A protease region spans residues 394-558; sequence LRITRGDIQT…MFTCKYADYI (165 aa). Residues His477 and Asp494 contribute to the active site. The Nucleophile role is filled by Cys547.

This sequence belongs to the peptidase C48 family. Binds to SUMO2 and SUMO3. Interacts with the C-terminal domain of NUP153 via its N-terminus. Interacts with MTA1. Post-translationally, polyubiquitinated; which leads to proteasomal degradation. As to expression, highly expressed in testis. Detected in brain, heart and thymus.

The protein localises to the nucleus. It is found in the nuclear pore complex. It localises to the nucleus membrane. The protein resides in the cytoplasm. Its subcellular location is the cytoplasmic vesicle. The protein localises to the PML body. Its function is as follows. Protease that catalyzes two essential functions in the SUMO pathway. The first is the hydrolysis of an alpha-linked peptide bond at the C-terminal end of the small ubiquitin-like modifier (SUMO) propeptides, SUMO1, SUMO2 and SUMO3 leading to the mature form of the proteins. The second is the deconjugation of SUMO1, SUMO2 and SUMO3 from targeted proteins, by cleaving an epsilon-linked peptide bond between the C-terminal glycine of the mature SUMO and the lysine epsilon-amino group of the target protein. May down-regulate CTNNB1 levels and thereby modulate the Wnt pathway. Deconjugates SUMO2 from MTA1. Plays a dynamic role in adipogenesis by desumoylating and promoting the stabilization of CEBPB. Acts as a regulator of the cGAS-STING pathway by catalyzing desumoylation of CGAS and STING1 during the late phase of viral infection. Functionally, activates transcription. This is Sentrin-specific protease 2 (Senp2) from Mus musculus (Mouse).